We begin with the raw amino-acid sequence, 1050 residues long: Integrin alpha-5 (1050 aa).

An N-terminal signal peptide occupies residues 1 to 32 (MQLPRGSRVPGLVATFLFPVLCALLTFSSVRG). At 33-996 (FNLAVEQPAV…IHWAKPESSY (964 aa)) the chain is on the extracellular side. 7 FG-GAP repeats span residues 34 to 99 (NLAV…GTNC), 116 to 175 (DTPQ…NFTT), 183 to 235 (RTDF…QEAY), 249 to 301 (QTRQ…GTDL), 302 to 367 (RSLY…MEST), 368 to 426 (PHLI…GVDS), and 430 to 493 (QVLQ…ISPN). N-linked (GlcNAc...) asparagine glycans are attached at residues N75, N95, and N98. Intrachain disulfides connect C90–C99 and C145–C166. N172 carries an N-linked (GlcNAc...) asparagine glycan. Residues C182 and C195 are joined by a disulfide bond. Positions 270, 272, 274, 276, and 278 each coordinate Ca(2+). N-linked (GlcNAc...) asparagine glycans are attached at residues N287, N297, and N306. Positions 324, 326, 328, 330, 332, 390, 392, 394, 398, 454, 456, 458, 460, and 462 each coordinate Ca(2+). C502 and C513 are oxidised to a cystine. N-linked (GlcNAc...) asparagine glycans are attached at residues N507, N515, N521, and N600. The cysteines at positions 519 and 575 are disulfide-linked. Residues C636 and C642 are joined by a disulfide bond. N-linked (GlcNAc...) asparagine glycans are attached at residues N649, N714, N763, and N861. C708 and C721 are joined by a disulfide. 3 disulfide bridges follow: C839/C958, C862/C922, and C910/C917. Residues 997–1022 (GVPLWIIILAILIGLLLLALLIYVLY) form a helical membrane-spanning segment. The Cytoplasmic segment spans residues 1023 to 1050 (KLGFFKRSYQYGTAMEKAELKPQAASEA). Residues 1025–1029 (GFFKR) carry the GFFKR motif motif.

It belongs to the integrin alpha chain family. Heterodimer of an alpha and a beta subunit. The alpha subunit is composed of a heavy and a light chain linked by a disulfide bond. Alpha-5 associates with beta-1.

Its subcellular location is the cell membrane. The protein resides in the cell junction. It localises to the focal adhesion. Functionally, integrin alpha-5/beta-1 (ITGA5:ITGB1) is a receptor for fibronectin. It recognizes the sequence R-G-D in its ligands. ITGA5:ITGB1 acts as a receptor for fibrillin-1 (FBN1) and mediates R-G-D-dependent cell adhesion to FBN1. ITGA5:ITGB1 acts as a receptor for fibronectin (FN1) and mediates R-G-D-dependent cell adhesion to FN1. ITGA5:ITGB1 is a receptor for IL1B and binding is essential for IL1B signaling. ITGA5:ITGB3 is a receptor for soluble CD40LG and is required for CD40/CD40LG signaling. The sequence is that of Integrin alpha-5 (itga5) from Xenopus laevis (African clawed frog).